The sequence spans 291 residues: T-cell leukemia homeobox protein 3 (291 aa).

Residues 1–56 (MEAPASAQTPHPHEPISFGIDQILNSPDQDSAPAPRGPDGASYLGGPPGGRPGATY) form a disordered region. Residues 166–225 (RKKPRTSFSRVQICELEKRFHRQKYLASAERAALAKSLKMTDAQVKTWFQNRRTKWRRQT) constitute a DNA-binding region (homeobox).

The protein resides in the nucleus. The protein is T-cell leukemia homeobox protein 3 (TLX3) of Homo sapiens (Human).